A 386-amino-acid chain; its full sequence is MEHDLERGPPGPRRPPRGPPLSSSLGLALLLLLLALLFWLYIVMSDWTGGALLVLYSFALMLIIIILIIFIFRRDLLCPLGALCILLLMITLLLIALWNLHGQALFLGIVLFIFGCLLVLGIWIYLLEMLWRLGATIWQLLAFFLAFFLDLILLIIALYLQQNWWTLLVDLLWLLLFLAILIWMYYHGQRHSDEHHHDDSLPHPQQATDDSGHESDSNSNEGRHHLLVSGAGDGPPLCSQNLGAPGGGPDNGPQDPDNTDDNGPQDPDNTDDNGPHDPLPQDPDNTDDNGPQDPDNTDDNGPHDPLPHSPSDSAGNDGGPPQLTEEVENKGGDQGPPLMTDGGGGHSHDSGHGGGDPHLPTLLLGSSGSGGDDDDPHGPVQLSYYD.

Topologically, residues 1–23 (MEHDLERGPPGPRRPPRGPPLSS) are cytoplasmic. The helical transmembrane segment at 24-44 (SLGLALLLLLLALLFWLYIVM) threads the bilayer. The Extracellular segment spans residues 45-51 (SDWTGGA). Residues 52–72 (LLVLYSFALMLIIIILIIFIF) traverse the membrane as a helical segment. Topologically, residues 73-75 (RRD) are cytoplasmic. Residues 76–96 (LLCPLGALCILLLMITLLLIA) form a helical membrane-spanning segment. Over 97-106 (LWNLHGQALF) the chain is Extracellular. Residues 107 to 127 (LGIVLFIFGCLLVLGIWIYLL) form a helical membrane-spanning segment. Residues 128 to 139 (EMLWRLGATIWQ) lie on the Cytoplasmic side of the membrane. A helical transmembrane segment spans residues 140–160 (LLAFFLAFFLDLILLIIALYL). Topologically, residues 161–163 (QQN) are extracellular. A helical membrane pass occupies residues 164-184 (WWTLLVDLLWLLLFLAILIWM). Residues 185–386 (YYHGQRHSDE…HGPVQLSYYD (202 aa)) are Cytoplasmic-facing. A CTAR1 region spans residues 194–232 (EHHHDDSLPHPQQATDDSGHESDSNSNEGRHHLLVSGAG). The interval 194-386 (EHHHDDSLPH…HGPVQLSYYD (193 aa)) is disordered. Positions 204 to 208 (PQQAT) match the Interaction with host TRAF proteins motif. The span at 210–224 (DSGHESDSNSNEGRH) shows a compositional bias: basic and acidic residues. The span at 251–267 (NGPQDPDNTDDNGPQDP) shows a compositional bias: low complexity. A CTAR2 region spans residues 351–386 (GHGGGDPHLPTLLLGSSGSGGDDDDPHGPVQLSYYD).

It belongs to the herpesviridae LMP-1 family. In terms of assembly, interacts (via PXQXT motif) with host tumor necrosis factor receptor-associated factor (TRAF) proteins TRAF1, TRAF2, TRAF3 and TRAF5. Interacts with human protein ZMYND11; leading to negatively regulate NF-kappa-B activation. Interacts with host UBE2I; this interaction induces the sumoylation of various cellular proteins. Interacts with host IRF7. Interacts with host TYK2. Ubiquitinated on the N-terminus.

It is found in the host cell membrane. Functionally, acts as a CD40 functional homolog to prevent apoptosis of infected B-lymphocytes and drive their proliferation. Functions as a constitutively active tumor necrosis factor receptor that induces the activation of several signaling pathways, including those of the NF-kappa-B family. LMP1 signaling leads to up-regulation of antiapoptotic proteins and provide growth signals in latently infected cells. Interacts with host UBE2I and subsequently affects the sumoylation state of several cellular proteins. For example, induces the sumoylation of host IRF7 thereby limiting its transcriptional activity and modulating the activation of innate immune responses. Also inhibits host IFN-alpha-stimulated STAT2 nuclear translocation and interferon-stimulated response element transcriptional activity by interacting with and inhibiting host TYK2. Induces SUMO expression during viral latency thereby dysregulating the host sumoylation processes. This Epstein-Barr virus (strain B95-8) (HHV-4) protein is Latent membrane protein 1 (LMP1).